Consider the following 217-residue polypeptide: ATP synthase subunit 4, mitochondrial (217 aa).

A mitochondrion-targeting transit peptide spans 1 to 14; that stretch reads MPFARVGALSARHY. The next 2 membrane-spanning stretches (helical) occupy residues 41 to 61 and 66 to 86; these read GVLA…LYIV and IVLG…GPGY.

F-type ATP synthases have 2 components, the catalytic core F(1) and the membrane-embedded component F(0), linked together by a central stalk and a peripheral stalk. The central stalk, also called rotor shaft, is often seen as part of F(1). The peripheral stalk is seen as part of F(0). F(0) contains the membrane channel next to the rotor. F-type ATP synthases form dimers but each monomer functions independently in ATP generation. The dimer consists of 17 different polypeptides: ATP1 (subunit alpha, 3 molecules per monomer, part of F(1)), ATP2 (subunit beta, 3 copies per monomer, part of F(1)), ATP3 (subunit gamma, part of the central stalk), ATP4 (subunit b, part of the peripheral stalk), ATP5/OSCP (subunit 5/OSCP, part of the peripheral stalk), ATP6 (subunit a, part of the peripheral stalk), ATP7 (subunit d, part of the peripheral stalk), ATP8 (subunit 8, part of the peripheral stalk), OLI1 (subunit c, part of the rotor, 10 molecules per monomer), ATP14 (subunit h, part of the peripheral stalk), ATP15 (subunit epsilon, part of the central stalk), ATP16 (subunit delta, part of the central stalk), ATP17 (subunit f, part of the peripheral stalk), ATP18 (subunit i/j, part of the peripheral stalk), ATP19 (subunit k, dimer-specific, at interface between monomers), ATP20 (subunit g, at interface between monomers), TIM11 (subunit e, at interface between monomers).

It localises to the mitochondrion inner membrane. Its function is as follows. Mitochondrial membrane ATP synthase (F(1)F(0) ATP synthase or Complex V) produces ATP from ADP in the presence of a proton gradient across the membrane which is generated by electron transport complexes of the respiratory chain. F-type ATP synthases consist of two structural domains, F(1) - containing the extramembraneous catalytic core, and F(0) - containing the membrane proton channel, linked together by a central stalk and a peripheral stalk. During catalysis, ATP synthesis in the catalytic domain of F(1) is coupled via a rotary mechanism of the central stalk subunits to proton translocation. Part of the complex F(0) domain and the peripheral stalk, which acts as a stator to hold the catalytic alpha/ATP1(3)beta/ATP2(3) subcomplex and subunit a/ATP6 static relative to the rotary elements. This is ATP synthase subunit 4, mitochondrial from Yarrowia lipolytica (strain CLIB 122 / E 150) (Yeast).